The sequence spans 159 residues: Phosphopantetheine adenylyltransferase (159 aa).

Position 16 (H16) interacts with ATP. Positions 40, 72, and 86 each coordinate substrate. ATP is bound by residues G87–R89, E97, and Y122–S128.

This sequence belongs to the bacterial CoaD family. Homohexamer. Requires Mg(2+) as cofactor.

Its subcellular location is the cytoplasm. The catalysed reaction is (R)-4'-phosphopantetheine + ATP + H(+) = 3'-dephospho-CoA + diphosphate. It participates in cofactor biosynthesis; coenzyme A biosynthesis; CoA from (R)-pantothenate: step 4/5. In terms of biological role, reversibly transfers an adenylyl group from ATP to 4'-phosphopantetheine, yielding dephospho-CoA (dPCoA) and pyrophosphate. The protein is Phosphopantetheine adenylyltransferase of Dehalococcoides mccartyi (strain ATCC BAA-2266 / KCTC 15142 / 195) (Dehalococcoides ethenogenes (strain 195)).